The chain runs to 664 residues: Semaphorin-7A (664 aa).

The N-terminal stretch at 1–44 is a signal peptide; sequence MTPPPPGRAAPSAPRARVLSLPARFGLPLRLRLLLVFWVAAASA. Positions 53 to 488 constitute a Sema domain; the sequence is RISAVWKGQD…SQWEVSQVPL (436 aa). Asparagine 102 is a glycosylation site (N-linked (GlcNAc...) asparagine). A disulfide bridge connects residues cysteine 117 and cysteine 123. Asymmetric dimethylarginine is present on arginine 132. Cysteine 140 and cysteine 149 are disulfide-bonded. Asparagine 154 and asparagine 256 each carry an N-linked (GlcNAc...) asparagine glycan. 7 cysteine pairs are disulfide-bonded: cysteine 264/cysteine 364, cysteine 289/cysteine 333, cysteine 491/cysteine 509, cysteine 498/cysteine 539, cysteine 501/cysteine 516, cysteine 564/cysteine 611, and cysteine 585/cysteine 594. The interaction with integrins stretch occupies residues 265–267; the sequence is RGD. A Cell attachment site motif is present at residues 265 to 267; the sequence is RGD. An N-linked (GlcNAc...) asparagine glycan is attached at asparagine 328. In terms of domain architecture, Ig-like C2-type spans 542–627; that stretch reads PKPDEAPLQK…YLREAQHWEL (86 aa). Asparagine 600 is a glycosylation site (N-linked (GlcNAc...) asparagine). Residue alanine 646 is the site of GPI-anchor amidated alanine attachment. The propeptide at 647–664 is removed in mature form; that stretch reads ASFWLGVLPTLILGLLVH.

This sequence belongs to the semaphorin family. As to quaternary structure, interacts with PLXNC1. Interacts with ITGA1 and ITGB1. As to expression, highly expressed in activated T-cells (at protein level). Highest expression in brain. Lower in heart, thymus, spleen, testis and ovary. The expression increases in late embryonic and postnatal stages. Detected in T-cells.

It is found in the cell membrane. In terms of biological role, plays an important role in integrin-mediated signaling and functions both in regulating cell migration and immune responses. Promotes formation of focal adhesion complexes, activation of the protein kinase PTK2/FAK1 and subsequent phosphorylation of MAPK1 and MAPK3. Promotes production of pro-inflammatory cytokines by monocytes and macrophages. Plays an important role in modulating inflammation and T-cell-mediated immune responses. Promotes axon growth in the embryonic olfactory bulb. Promotes attachment, spreading and dendrite outgrowth in melanocytes. The polypeptide is Semaphorin-7A (Sema7a) (Mus musculus (Mouse)).